A 428-amino-acid polypeptide reads, in one-letter code: ETS domain-containing protein Elk-1 (428 aa).

A DNA-binding region (ETS) is located at residues 5–86 (VTLWQFLLQL…SGQKFVYKFV (82 aa)). 3 disordered regions span residues 121 to 149 (AAPGDTVSGKPGTPKGAGMAGPGGLARSS), 165 to 205 (QSLQ…SPLE), and 228 to 358 (NLKS…SLLP). Residues 177 to 205 (PAVVLPSAAPAGAAAPPSGSRSTSPSPLE) show a composition bias toward low complexity. Glycyl lysine isopeptide (Lys-Gly) (interchain with G-Cter in SUMO) cross-links involve residues Lys-230, Lys-249, and Lys-254. Positions 248–261 (VKVEGPKEELEVAG) are enriched in basic and acidic residues. Residue Ser-324 is modified to Phosphoserine; by MAPK1. 4 positions are modified to phosphothreonine; by MAPK1: Thr-336, Thr-353, Thr-363, and Thr-368. The interval 349–399 (GPALTPSLLPTHTLTPVLLTPSSLPPSIHFWSTLSPIAPRSPAKLSFQFPS) is sufficient for interaction with MAD2L2. O-linked (GlcNAc) threonine glycosylation is present at Thr-381. At Ser-383 the chain carries Phosphoserine; by MAPK1 and MAPK8. Residue Ser-389 is modified to Phosphoserine; by MAPK1. Position 417 is a phosphothreonine; by MAPK1 (Thr-417). Residue Ser-422 is modified to Phosphoserine; by MAPK1.

It belongs to the ETS family. As to quaternary structure, interacts in its sumoylated form with PIAS2/PIASX which enhances its transcriptional activator activity. Interacts with MAD2L2; the interaction is direct and promotes phosphorylation by the kinases MAPK8 and/or MAPK9. Interacts with POU1F1. Post-translationally, sumoylation represses transcriptional activator activity as it results in recruitment of HDAC2 to target gene promoters which leads to decreased histone acetylation and reduced transactivator activity. It also regulates nuclear retention. On mitogenic stimulation, phosphorylated on C-terminal serine and threonine residues by MAPK1. Ser-383 and Ser-389 are the preferred sites for MAPK1. In vitro, phosphorylation by MAPK1 potentiates ternary complex formation with the serum responses factors, SRE and SRF. Also phosphorylated on Ser-383 by MAPK8 and/or MAKP9. Phosphorylation leads to loss of sumoylation and restores transcriptional activator activity. Phosphorylated and activated by CAMK4, MAPK11, MAPK12 and MAPK14. Upon bFGF stimulus, phosphorylated by PAK1. Phosphorylated by PRP4K at Thr-417; phosphorylation activation ELK1 transcriptional activity. Lung and testis.

Its subcellular location is the nucleus. Transcription factor that binds to purine-rich DNA sequences. Forms a ternary complex with SRF and the ETS and SRF motifs of the serum response element (SRE) on the promoter region of immediate early genes such as FOS and IER2. Induces target gene transcription upon JNK and MAPK-signaling pathways stimulation. In Homo sapiens (Human), this protein is ETS domain-containing protein Elk-1.